Reading from the N-terminus, the 369-residue chain is 4-hydroxy-3-methylbut-2-en-1-yl diphosphate synthase (flavodoxin) (369 aa).

Cys270, Cys273, Cys305, and Glu312 together coordinate [4Fe-4S] cluster.

This sequence belongs to the IspG family. [4Fe-4S] cluster is required as a cofactor.

It catalyses the reaction (2E)-4-hydroxy-3-methylbut-2-enyl diphosphate + oxidized [flavodoxin] + H2O + 2 H(+) = 2-C-methyl-D-erythritol 2,4-cyclic diphosphate + reduced [flavodoxin]. It functions in the pathway isoprenoid biosynthesis; isopentenyl diphosphate biosynthesis via DXP pathway; isopentenyl diphosphate from 1-deoxy-D-xylulose 5-phosphate: step 5/6. Its function is as follows. Converts 2C-methyl-D-erythritol 2,4-cyclodiphosphate (ME-2,4cPP) into 1-hydroxy-2-methyl-2-(E)-butenyl 4-diphosphate. This chain is 4-hydroxy-3-methylbut-2-en-1-yl diphosphate synthase (flavodoxin), found in Pseudomonas fluorescens (strain Pf0-1).